The sequence spans 908 residues: Disease resistance protein RPP8 (908 aa).

Residues 15–57 (DLLSRESERLQGIDGQLDGLKRQLRSLQSLLKDADAKKHGSDR) adopt a coiled-coil conformation. In terms of domain architecture, NB-ARC spans 146–459 (RQRVQREIRQ…AEGIYDGSTI (314 aa)). ATP is bound at residue 192–199 (GMGGIGKT). LRR repeat units follow at residues 575–600 (LTLL…IGGL), 601–623 (IHLR…MRNL), 648–673 (MIQL…DLVN), 693–718 (MTKL…SLRE), 722–746 (LETL…VLDH), 748–770 (IHLK…QFPP), 793–820 (LLHL…GFPQ), 842–867 (MPCL…KYIT), and 882–905 (KEKL…QFIN).

The protein belongs to the disease resistance NB-LRR family. RPP8/HRT subfamily. As to quaternary structure, interacts with the NAC protein TIP. Interacts with MORC1/CRT1. Interacts with COP1 and is subsequently degraded in a 26s proteasome dependent manner. As to expression, mostly expressed in leaves, and, to a lower extent, in roots.

It localises to the cell membrane. Disease resistance protein. Resistance proteins guard the plant against pathogens that contain an appropriate avirulence protein via an indirect interaction with this avirulence protein. That triggers a defense system including the hypersensitive response, which restricts the pathogen growth. The interaction with TIP (TCV-interacting protein) may be essential for the recognition of the avirulence proteins, and the triggering of the defense response. Triggers resistance to turnip crinkle virus (TCV) via a SAG101-dependent pathway. The chain is Disease resistance protein RPP8 (RPP8) from Arabidopsis thaliana (Mouse-ear cress).